Here is a 465-residue protein sequence, read N- to C-terminus: ATP-dependent protease ATPase subunit HslU (465 aa).

Residues Val19 and 61 to 66 each bind ATP; that span reads GVGKTE. The disordered stretch occupies residues 153 to 175; it reads LFQSDGSDGDDETTEQDSHDEIR. ATP-binding residues include Asp279, Glu343, and Arg415.

This sequence belongs to the ClpX chaperone family. HslU subfamily. As to quaternary structure, a double ring-shaped homohexamer of HslV is capped on each side by a ring-shaped HslU homohexamer. The assembly of the HslU/HslV complex is dependent on binding of ATP.

It localises to the cytoplasm. In terms of biological role, ATPase subunit of a proteasome-like degradation complex; this subunit has chaperone activity. The binding of ATP and its subsequent hydrolysis by HslU are essential for unfolding of protein substrates subsequently hydrolyzed by HslV. HslU recognizes the N-terminal part of its protein substrates and unfolds these before they are guided to HslV for hydrolysis. The protein is ATP-dependent protease ATPase subunit HslU of Oceanobacillus iheyensis (strain DSM 14371 / CIP 107618 / JCM 11309 / KCTC 3954 / HTE831).